We begin with the raw amino-acid sequence, 361 residues long: Molybdenum import ATP-binding protein ModC (361 aa).

Residues M1–Q228 enclose the ABC transporter domain. Residue G31 to T38 coordinates ATP. Residues R289 to D356 enclose the Mop domain.

It belongs to the ABC transporter superfamily. Molybdate importer (TC 3.A.1.8) family. The complex is composed of two ATP-binding proteins (ModC), two transmembrane proteins (ModB) and a solute-binding protein (ModA).

It localises to the cell inner membrane. The enzyme catalyses molybdate(out) + ATP + H2O = molybdate(in) + ADP + phosphate + H(+). Part of the ABC transporter complex ModABC involved in molybdenum import. Responsible for energy coupling to the transport system. The polypeptide is Molybdenum import ATP-binding protein ModC (Shewanella oneidensis (strain ATCC 700550 / JCM 31522 / CIP 106686 / LMG 19005 / NCIMB 14063 / MR-1)).